The following is a 193-amino-acid chain: DNA damage-inducible transcript 4-like protein (193 aa).

Belongs to the DDIT4 family.

The protein resides in the cytoplasm. Inhibits cell growth by regulating the TOR signaling pathway upstream of the TSC1-TSC2 complex and downstream of AKT1. This is DNA damage-inducible transcript 4-like protein (DDIT4L) from Bos taurus (Bovine).